A 157-amino-acid chain; its full sequence is MEFLMSKHEADAPHLLIVEARFYDDLADALLDGAKAALDEAGATYDVVTVPGALEIPATISFALDGADNGGTEYDGFVALGTVIRGETYHFDIVSNESCRALTDLSVEESIAIGNGILTVENEEQAWVHARREDKDKGGFAARAALTMIGLRKKFGA.

5-amino-6-(D-ribitylamino)uracil-binding positions include Phe22, 53-55 (ALE), and 82-84 (TVI). 87 to 88 (ET) contributes to the (2S)-2-hydroxy-3-oxobutyl phosphate binding site. His90 acts as the Proton donor in catalysis. Asn115 contacts 5-amino-6-(D-ribitylamino)uracil. Position 129 (His129) interacts with (2S)-2-hydroxy-3-oxobutyl phosphate.

This sequence belongs to the DMRL synthase family. As to quaternary structure, homopentamer.

It catalyses the reaction (2S)-2-hydroxy-3-oxobutyl phosphate + 5-amino-6-(D-ribitylamino)uracil = 6,7-dimethyl-8-(1-D-ribityl)lumazine + phosphate + 2 H2O + H(+). It functions in the pathway cofactor biosynthesis; riboflavin biosynthesis; riboflavin from 2-hydroxy-3-oxobutyl phosphate and 5-amino-6-(D-ribitylamino)uracil: step 1/2. Its function is as follows. Catalyzes the formation of 6,7-dimethyl-8-ribityllumazine by condensation of 5-amino-6-(D-ribitylamino)uracil with 3,4-dihydroxy-2-butanone 4-phosphate. This is the penultimate step in the biosynthesis of riboflavin. This chain is 6,7-dimethyl-8-ribityllumazine synthase 1 (ribH1), found in Brucella abortus (strain 2308).